The primary structure comprises 223 residues: UPF0441 protein YgiB (223 aa).

A compositionally biased stretch (low complexity) spans 178–195; sequence TVPKTAMAPKPATTTTVT. The disordered stretch occupies residues 178 to 223; it reads TVPKTAMAPKPATTTTVTRGGFGESVAKQSTMQRSAAGTSTRSMGG. Residues 204-223 show a composition bias toward polar residues; sequence AKQSTMQRSAAGTSTRSMGG.

The protein belongs to the UPF0441 family.

The chain is UPF0441 protein YgiB from Salmonella paratyphi A (strain ATCC 9150 / SARB42).